The chain runs to 144 residues: Large ribosomal subunit protein uL13 (144 aa).

It belongs to the universal ribosomal protein uL13 family. As to quaternary structure, part of the 50S ribosomal subunit.

In terms of biological role, this protein is one of the early assembly proteins of the 50S ribosomal subunit, although it is not seen to bind rRNA by itself. It is important during the early stages of 50S assembly. The protein is Large ribosomal subunit protein uL13 of Mycoplasmopsis synoviae (strain 53) (Mycoplasma synoviae).